A 144-amino-acid polypeptide reads, in one-letter code: Maximins 3/H11 type 1 (144 aa).

A signal peptide spans 1–18 (MNFKYIVAVSFLIASAYA). Propeptides lie at residues 19–43 (RSVQNDEQSLSQRDVLEEESLREIR) and 73–122 (RTAE…KKEK). I143 is modified (isoleucine amide).

It belongs to the bombinin family. Expressed by the skin glands.

The protein localises to the secreted. In terms of biological role, maximin-3 shows antibacterial activity against both Gram-positive and Gram-negative bacteria. It also shows antimicrobial activity against the fungus C.albicans, but not against A.flavus nor P.uticale. It has little hemolytic activity. It possess a significant cytotoxicity against tumor cell lines. It possess a significant anti-HIV activity. It shows high spermicidal activity. Functionally, maximin-H11 shows antimicrobial activity against bacteria and against the fungus C.albicans. Shows strong hemolytic activity. The polypeptide is Maximins 3/H11 type 1 (Bombina maxima (Giant fire-bellied toad)).